We begin with the raw amino-acid sequence, 260 residues long: DNA repair protein RecO (260 aa).

This sequence belongs to the RecO family.

Involved in DNA repair and RecF pathway recombination. The chain is DNA repair protein RecO from Desulfosudis oleivorans (strain DSM 6200 / JCM 39069 / Hxd3) (Desulfococcus oleovorans).